Consider the following 1274-residue polypeptide: DENN domain-containing protein 5B (1274 aa).

S2 is modified (N-acetylserine). The 206-residue stretch at 39 to 244 (DELAGENFDQ…EVPLPPPGRS (206 aa)) folds into the uDENN domain. Residues S49 and S178 each carry the phosphoserine modification. The cDENN domain maps to 263 to 399 (ELPLSDYPLR…VDFIQELSEV (137 aa)). The dDENN domain occupies 401-581 (LQFGIPPEGS…DNKIMSQWEE (181 aa)). The 161-residue stretch at 772-932 (LEENTLIASL…DYFCFTSVFT (161 aa)) folds into the RUN 1 domain. A Phosphoserine modification is found at S822. A helical transmembrane segment spans residues 916-936 (LLSLNAVDYFCFTSVFTTIMI). In terms of domain architecture, PLAT spans 936-1044 (IPYRSVIIPI…DDGSLERILI (109 aa)). The residue at position 1062 (T1062) is a Phosphothreonine. Phosphoserine occurs at positions 1068, 1076, and 1079. Residues 1118–1267 (TVLLCGENGL…QDFTIVLEGS (150 aa)) form the RUN 2 domain.

Belongs to the RAB6IP1 family.

It localises to the membrane. In terms of biological role, guanine nucleotide exchange factor (GEF) which may activate RAB39A and/or RAB39B. Promotes the exchange of GDP to GTP, converting inactive GDP-bound Rab proteins into their active GTP-bound form. The polypeptide is DENN domain-containing protein 5B (Dennd5b) (Mus musculus (Mouse)).